Here is a 190-residue protein sequence, read N- to C-terminus: Jupiter microtubule associated homolog 2 (190 aa).

N-acetylmethionine is present on Met1. The tract at residues Met1–Tyr190 is disordered. A Phosphoserine modification is found at Ser30. Thr35 carries the post-translational modification Phosphothreonine. Residues Thr35–Ala44 show a composition bias toward polar residues. Phosphoserine is present on residues Ser45, Ser69, and Ser97. Positions Lys110–Ala129 are enriched in basic and acidic residues. Ser132 and Ser144 each carry phosphoserine. Basic and acidic residues predominate over residues Pro139–Leu167.

It belongs to the JUPITER family. Monomer. Dimer. Interacts with TPCN1. In terms of tissue distribution, expressed in liver, kidney, prostate, testis and uterus.

It is found in the cytoplasm. Its subcellular location is the nucleus. In terms of biological role, nicotinic acid adenine dinucleotide phosphate (NAADP) binding protein required for NAADP-evoked intracellular calcium release. Confers NAADP-sensitivity to the two pore channels (TPCs) complex. Enables NAADP to activate Ca(2+) release from the endoplasmic reticulum through ryanodine receptors. Its function is as follows. (Microbial infection) Involved in the endolysosomal trafficking of human coronavirus SARS-CoV-2. The polypeptide is Jupiter microtubule associated homolog 2 (Homo sapiens (Human)).